Consider the following 793-residue polypeptide: Neurobeachin (793 aa).

2 disordered regions span residues 68–92 (ENIK…TGAK) and 685–793 (RETA…EILK). Polar residues-rich tracts occupy residues 77–90 (NVST…QTTG), 689–710 (RSGS…STET), 750–762 (NILN…TSTG), and 782–793 (ESLTESPSEILK).

It belongs to the WD repeat neurobeachin family. Interacts with RII subunit of PKA. Forebrain and cerebellum.

The protein localises to the cytoplasm. It is found in the membrane. Its function is as follows. Binds to type II regulatory subunits of protein kinase A and anchors/targets them to the membrane. May anchor the kinase to cytoskeletal and/or organelle-associated proteins. This is Neurobeachin (NBEA) from Gallus gallus (Chicken).